Reading from the N-terminus, the 850-residue chain is DNA polymerase I (850 aa).

The region spanning Met1–Glu288 is the 5'-3' exonuclease domain. A polymerase region spans residues Val470 to Lys850.

Belongs to the DNA polymerase type-A family.

It catalyses the reaction DNA(n) + a 2'-deoxyribonucleoside 5'-triphosphate = DNA(n+1) + diphosphate. In addition to polymerase activity, this DNA polymerase exhibits 3'-5' and 5'-3' exonuclease activity. The protein is DNA polymerase I (polA) of Caldicellulosiruptor bescii (strain ATCC BAA-1888 / DSM 6725 / KCTC 15123 / Z-1320) (Anaerocellum thermophilum).